The sequence spans 225 residues: Uracil-DNA glycosylase (225 aa).

Residue aspartate 65 is the Proton acceptor of the active site.

The protein belongs to the uracil-DNA glycosylase (UDG) superfamily. UNG family.

The protein resides in the cytoplasm. It catalyses the reaction Hydrolyzes single-stranded DNA or mismatched double-stranded DNA and polynucleotides, releasing free uracil.. Its function is as follows. Excises uracil residues from the DNA which can arise as a result of misincorporation of dUMP residues by DNA polymerase or due to deamination of cytosine. This Bacillus cereus (strain AH187) protein is Uracil-DNA glycosylase.